The following is a 127-amino-acid chain: Protein ApaG (127 aa).

One can recognise an ApaG domain in the interval Asn-3 to His-127.

This Nitrosomonas eutropha (strain DSM 101675 / C91 / Nm57) protein is Protein ApaG.